An 88-amino-acid polypeptide reads, in one-letter code: Small ribosomal subunit protein bS20 (88 aa).

A disordered region spans residues 1–28 (MANIKSQIKRNKTNEKARLRNKAVKSSL).

This sequence belongs to the bacterial ribosomal protein bS20 family.

Functionally, binds directly to 16S ribosomal RNA. This is Small ribosomal subunit protein bS20 from Streptomyces avermitilis (strain ATCC 31267 / DSM 46492 / JCM 5070 / NBRC 14893 / NCIMB 12804 / NRRL 8165 / MA-4680).